The following is a 157-amino-acid chain: Endoribonuclease YbeY (157 aa).

Residues His111, His115, and His121 each contribute to the Zn(2+) site.

It belongs to the endoribonuclease YbeY family. Zn(2+) is required as a cofactor.

The protein localises to the cytoplasm. Single strand-specific metallo-endoribonuclease involved in late-stage 70S ribosome quality control and in maturation of the 3' terminus of the 16S rRNA. The sequence is that of Endoribonuclease YbeY from Pseudomonas entomophila (strain L48).